The following is a 475-amino-acid chain: tRNA-2-methylthio-N(6)-dimethylallyladenosine synthase (475 aa).

Residues 3–120 (KKLHIKTWGC…LPEMIDQIKD (118 aa)) form the MTTase N-terminal domain. [4Fe-4S] cluster contacts are provided by Cys12, Cys49, Cys83, Cys157, Cys161, and Cys164. One can recognise a Radical SAM core domain in the interval 143-375 (RAEGPSAFVS…QDRITQQAMR (233 aa)). Residues 378 to 441 (RQMVGTVQRI…TNSLRGVFIR (64 aa)) enclose the TRAM domain.

The protein belongs to the methylthiotransferase family. MiaB subfamily. Monomer. The cofactor is [4Fe-4S] cluster.

It localises to the cytoplasm. It catalyses the reaction N(6)-dimethylallyladenosine(37) in tRNA + (sulfur carrier)-SH + AH2 + 2 S-adenosyl-L-methionine = 2-methylsulfanyl-N(6)-dimethylallyladenosine(37) in tRNA + (sulfur carrier)-H + 5'-deoxyadenosine + L-methionine + A + S-adenosyl-L-homocysteine + 2 H(+). Catalyzes the methylthiolation of N6-(dimethylallyl)adenosine (i(6)A), leading to the formation of 2-methylthio-N6-(dimethylallyl)adenosine (ms(2)i(6)A) at position 37 in tRNAs that read codons beginning with uridine. The polypeptide is tRNA-2-methylthio-N(6)-dimethylallyladenosine synthase (Shewanella pealeana (strain ATCC 700345 / ANG-SQ1)).